The sequence spans 43 residues: Bacteriocin mundticin (43 aa).

The cysteines at positions 9 and 14 are disulfide-linked.

In terms of biological role, this bacteriocin inhibits the growth of several Gram-positive bacteria, especially pathogenic L.monocytogenes and C.botulinum but has no effect on the growth of a number of yeasts and Gram-negative bacteria. The protein is Bacteriocin mundticin of Enterococcus mundtii.